The following is a 343-amino-acid chain: N-acetylornithine carbamoyltransferase (343 aa).

Residues 49 to 52 (SMRT), Trp-77, and Arg-112 each bind carbamoyl phosphate. Residue Glu-144 participates in N(2)-acetyl-L-ornithine binding. Residue 148 to 151 (HPCQ) coordinates carbamoyl phosphate. Residues Lys-252 and Leu-295 each contribute to the N(2)-acetyl-L-ornithine site. 294-295 (CL) provides a ligand contact to carbamoyl phosphate. Lys-302 is modified (N6-carboxylysine). Arg-322 is a carbamoyl phosphate binding site.

Belongs to the aspartate/ornithine carbamoyltransferase superfamily. AOTCase family. Homotrimer.

Its subcellular location is the cytoplasm. It catalyses the reaction N(2)-acetyl-L-ornithine + carbamoyl phosphate = N(2)-acetyl-L-citrulline + phosphate + H(+). It functions in the pathway amino-acid biosynthesis; L-arginine biosynthesis. Its activity is regulated as follows. Carboxylation at Lys-302 increases the catalytic activity of the enzyme. Its function is as follows. Catalyzes the transfer of the carbamoyl group from carbamoyl phosphate to the delta-amino group of N(2)-acetyl-L-ornithine to produce N(2)-acetyl-L-citrulline. This is a step in an alternative arginine biosynthesis pathway. The enzyme has no activity with ornithine. The protein is N-acetylornithine carbamoyltransferase of Xanthomonas axonopodis pv. citri (strain 306).